The chain runs to 964 residues: Coatomer subunit beta (964 aa).

5 HEAT repeats span residues 129–166, 238–275, 314–351, 393–430, and 466–506; these read ELLE…NFDW, AERS…APTA, KVMQ…SRNI, DVAA…KFPA, and SQIL…QQGS. Residues 490 to 501 show a composition bias toward basic and acidic residues; it reads RRLAGDQTEEQK. The interval 490 to 530 is disordered; the sequence is RRLAGDQTEEQKQQQGSAGGNAAGSAAEGSGSGNASNKVTS. Residues 512–526 show a composition bias toward low complexity; sequence AGSAAEGSGSGNASN.

As to quaternary structure, oligomeric complex that consists of at least the alpha, beta, beta', gamma, delta, epsilon and zeta subunits. In terms of tissue distribution, during oogenesis and spermatogenesis, expressed in ovariole, germarium, testis tip and testis.

The protein resides in the cytoplasm. It is found in the golgi apparatus membrane. Its subcellular location is the cytoplasmic vesicle. The protein localises to the COPI-coated vesicle membrane. In terms of biological role, the coatomer is a cytosolic protein complex that binds to dilysine motifs and reversibly associates with Golgi non-clathrin-coated vesicles, which further mediate biosynthetic protein transport from the ER, via the Golgi up to the trans Golgi network. Coatomer complex is required for budding from Golgi membranes, and is essential for the retrograde Golgi-to-ER transport of dilysine-tagged proteins. Required for limiting lipid storage in lipid droplets. The sequence is that of Coatomer subunit beta from Drosophila melanogaster (Fruit fly).